Here is a 50-residue protein sequence, read N- to C-terminus: Insulin 2 (50 aa).

3 cysteine pairs are disulfide-bonded: Cys8-Cys36, Cys20-Cys49, and Cys35-Cys40.

This sequence belongs to the insulin family. Heterodimer of a B chain and an A chain linked by two disulfide bonds.

It is found in the secreted. Insulin decreases blood glucose concentration. It increases cell permeability to monosaccharides, amino acids and fatty acids. It accelerates glycolysis, the pentose phosphate cycle, and glycogen synthesis in liver. This chain is Insulin 2 (ins2), found in Batrachoididae sp. (Toadfish).